The following is a 63-amino-acid chain: Cecropin-A1 (63 aa).

The signal sequence occupies residues Met1–Ala23. Arg62 carries the post-translational modification Arginine amide.

The protein belongs to the cecropin family.

The protein resides in the secreted. In terms of biological role, cecropins have lytic and antibacterial activity against several Gram-positive and Gram-negative bacteria. The sequence is that of Cecropin-A1 (CecA1) from Drosophila mauritiana (Fruit fly).